Consider the following 163-residue polypeptide: Putative MucR family transcriptional regulatory protein RA0938 (163 aa).

The protein belongs to the ros/MucR family.

This is Putative MucR family transcriptional regulatory protein RA0938 from Rhizobium meliloti (strain 1021) (Ensifer meliloti).